Consider the following 79-residue polypeptide: NLKVLAVFVLCAILVVVTAERRGTETGGYKKDTLEDLKKRTHDCFDSFKEATCHMAKTNRLCKTSAKYQINCKKTCGLC.

The signal sequence occupies residues 1–19 (NLKVLAVFVLCAILVVVTA). Positions 20–37 (ERRGTETGGYKKDTLEDL) are excised as a propeptide. The ShKT domain maps to 44–79 (CFDSFKEATCHMAKTNRLCKTSAKYQINCKKTCGLC). Intrachain disulfides connect C44–C79, C53–C72, and C62–C76. The tract at residues 67–68 (KY) is crucial for binding to potassium channels.

The protein belongs to the sea anemone type 1 potassium channel toxin family. Type 1b subfamily.

It is found in the secreted. The protein localises to the nematocyst. Its function is as follows. Inhibits voltage-gated potassium channels (Kv1/KCNA). This chain is U-actitoxin-Avd9d, found in Anemonia viridis (Snakelocks anemone).